The primary structure comprises 461 residues: MTKTVRSETDTFGPIDVPAAALWGAQTQRSLAHFRISSEKMPPELILALARVKRACAEANRGLGKLDDAKAAAIAGAADEVLAGRHDGEFPLSVWQTGSGTQSNMNMNEVLANRASELLGGRRGPGRLVHPNDDVNLGQSSNDIFPTAMHVAAATQVKERLLPSLDLLRHALESKAEAFADVVKIGRTHLQDATPLTLGQEISGWAAQLALSEQAVRAALPMLCQLAVGGTAVGTGLNTDPSFGAAVAARLAEQSGLPFESAGNKFAALAGHEPLVFAHGALKTLAAALMKIANDIRWLASGPRSGLGELSLPENEPGSSIMPGKVNPTQCEAMTMLCCQVLGNDAALAIGAASGNFELNVFKPLIAHNFLQSARLLADGMDSLREHCVDGMEANRARIAELMARSLMLVTALNPHIGYDKAAAIAKHAHRHGTTLREAALALGHLSAEQFDAWVRPEDMV.

Substrate-binding positions include 99 to 101, arginine 127, 130 to 133, 140 to 142, and threonine 188; these read SGT, HPND, and SSN. Catalysis depends on histidine 189, which acts as the Proton donor/acceptor. Serine 319 is an active-site residue. Substrate is bound by residues serine 320 and 325–327; that span reads KVN.

Belongs to the class-II fumarase/aspartase family. Fumarase subfamily. As to quaternary structure, homotetramer.

Its subcellular location is the cytoplasm. It catalyses the reaction (S)-malate = fumarate + H2O. It functions in the pathway carbohydrate metabolism; tricarboxylic acid cycle; (S)-malate from fumarate: step 1/1. In terms of biological role, involved in the TCA cycle. Catalyzes the stereospecific interconversion of fumarate to L-malate. In Chromobacterium violaceum (strain ATCC 12472 / DSM 30191 / JCM 1249 / CCUG 213 / NBRC 12614 / NCIMB 9131 / NCTC 9757 / MK), this protein is Fumarate hydratase class II.